Here is a 637-residue protein sequence, read N- to C-terminus: tRNA uridine 5-carboxymethylaminomethyl modification enzyme MnmG (637 aa).

Residue 18–23 (GAGHAG) participates in FAD binding. Residue 281-295 (GPRYCPSIEDKIVRF) participates in NAD(+) binding.

Belongs to the MnmG family. Homodimer. Heterotetramer of two MnmE and two MnmG subunits. FAD serves as cofactor.

It localises to the cytoplasm. NAD-binding protein involved in the addition of a carboxymethylaminomethyl (cmnm) group at the wobble position (U34) of certain tRNAs, forming tRNA-cmnm(5)s(2)U34. The chain is tRNA uridine 5-carboxymethylaminomethyl modification enzyme MnmG from Ligilactobacillus salivarius (strain UCC118) (Lactobacillus salivarius).